The primary structure comprises 225 residues: UPF0758 protein Shew_3481 (225 aa).

In terms of domain architecture, MPN spans 102 to 224 (ILSDPDLTRD…IVSFAERGWI (123 aa)). Residues His173, His175, and Asp186 each contribute to the Zn(2+) site. A JAMM motif motif is present at residues 173–186 (HNHPSGGAEPSHAD).

It belongs to the UPF0758 family.

The chain is UPF0758 protein Shew_3481 from Shewanella loihica (strain ATCC BAA-1088 / PV-4).